The following is a 109-amino-acid chain: uncharacterized protein (109 aa).

Positions 63–109 are disordered; it reads DPSTWEPEEHETEHCRGHTLPEKKQKPQGGHGSDKDEDKGNCGCDHC. 2 stretches are compositionally biased toward basic and acidic residues: residues 73 to 87 and 94 to 109; these read ETEH…EKKQ and GSDK…CDHC.

This is an uncharacterized protein from Caenorhabditis elegans.